Consider the following 172-residue polypeptide: MALRIEDKKAIVAEVAEQVSSALSAAVADYRGLTVNQMTSLRKQARESGVYLRVVRNNLARLAIKGTEFECLADALKGPLVLALSKDEPGAAAKLFKNFQKDHNAFEVKNLAMSGELFGPEKLDDFAKLPTREEALATLLNIMQAPVTKFVRTLNEIPSQAVRVFAAVGDSK.

This sequence belongs to the universal ribosomal protein uL10 family. In terms of assembly, part of the ribosomal stalk of the 50S ribosomal subunit. The N-terminus interacts with L11 and the large rRNA to form the base of the stalk. The C-terminus forms an elongated spine to which L12 dimers bind in a sequential fashion forming a multimeric L10(L12)X complex.

Its function is as follows. Forms part of the ribosomal stalk, playing a central role in the interaction of the ribosome with GTP-bound translation factors. The sequence is that of Large ribosomal subunit protein uL10 from Francisella tularensis subsp. holarctica (strain FTNF002-00 / FTA).